We begin with the raw amino-acid sequence, 302 residues long: 4-hydroxy-tetrahydrodipicolinate synthase (302 aa).

Thr-55 serves as a coordination point for pyruvate. Tyr-144 (proton donor/acceptor) is an active-site residue. Lys-172 acts as the Schiff-base intermediate with substrate in catalysis. Val-214 serves as a coordination point for pyruvate.

This sequence belongs to the DapA family. As to quaternary structure, homotetramer; dimer of dimers.

The protein resides in the cytoplasm. The enzyme catalyses L-aspartate 4-semialdehyde + pyruvate = (2S,4S)-4-hydroxy-2,3,4,5-tetrahydrodipicolinate + H2O + H(+). It functions in the pathway amino-acid biosynthesis; L-lysine biosynthesis via DAP pathway; (S)-tetrahydrodipicolinate from L-aspartate: step 3/4. Catalyzes the condensation of (S)-aspartate-beta-semialdehyde [(S)-ASA] and pyruvate to 4-hydroxy-tetrahydrodipicolinate (HTPA). The polypeptide is 4-hydroxy-tetrahydrodipicolinate synthase (Synechococcus sp. (strain WH7803)).